The following is a 109-amino-acid chain: C-X-C motif chemokine 13 (109 aa).

A signal peptide spans 1-22; sequence MKFISTSLLLMLLVSSLSPVQG. Intrachain disulfides connect C33/C60 and C35/C76.

The protein belongs to the intercrine alpha (chemokine CxC) family. Highest levels in liver, followed by spleen, lymph node, appendix and stomach. Low levels in salivary gland, mammary gland and fetal spleen.

Its subcellular location is the secreted. Functionally, chemotactic for B-lymphocytes but not for T-lymphocytes, monocytes and neutrophils. Does not induce calcium release in B-lymphocytes. Binds to BLR1/CXCR5. This is C-X-C motif chemokine 13 (CXCL13) from Homo sapiens (Human).